Here is a 454-residue protein sequence, read N- to C-terminus: Serine--tRNA ligase (454 aa).

247 to 249 (TAE) contributes to the L-serine binding site. Residues 278–280 (RKE) and Val294 contribute to the ATP site. An L-serine-binding site is contributed by Glu301. 365–368 (ELAS) contacts ATP. Thr400 serves as a coordination point for L-serine.

The protein belongs to the class-II aminoacyl-tRNA synthetase family. Type-1 seryl-tRNA synthetase subfamily. Homodimer. The tRNA molecule binds across the dimer.

It is found in the cytoplasm. It catalyses the reaction tRNA(Ser) + L-serine + ATP = L-seryl-tRNA(Ser) + AMP + diphosphate + H(+). The enzyme catalyses tRNA(Sec) + L-serine + ATP = L-seryl-tRNA(Sec) + AMP + diphosphate + H(+). Its pathway is aminoacyl-tRNA biosynthesis; selenocysteinyl-tRNA(Sec) biosynthesis; L-seryl-tRNA(Sec) from L-serine and tRNA(Sec): step 1/1. Catalyzes the attachment of serine to tRNA(Ser). Is also able to aminoacylate tRNA(Sec) with serine, to form the misacylated tRNA L-seryl-tRNA(Sec), which will be further converted into selenocysteinyl-tRNA(Sec). The polypeptide is Serine--tRNA ligase (Pyrobaculum calidifontis (strain DSM 21063 / JCM 11548 / VA1)).